Reading from the N-terminus, the 142-residue chain is Transcriptional regulator MraZ (142 aa).

2 consecutive SpoVT-AbrB domains span residues 5–51 (ASSL…PRPE) and 77–120 (AMDV…DKAS).

This sequence belongs to the MraZ family. In terms of assembly, forms oligomers.

It localises to the cytoplasm. The protein resides in the nucleoid. The protein is Transcriptional regulator MraZ of Verminephrobacter eiseniae (strain EF01-2).